Consider the following 250-residue polypeptide: Small ribosomal subunit protein uS5 (250 aa).

Polar residues predominate over residues 1–22; the sequence is MNVVETSSEMNSNVEKASTPKQ. Residues 1-40 are disordered; it reads MNVVETSSEMNSNVEKASTPKQENNKRFERKSRPSSRQKV. One can recognise an S5 DRBM domain in the interval 45–108; sequence FEEKVVTIRR…KEAKKNLVSV (64 aa).

The protein belongs to the universal ribosomal protein uS5 family. Part of the 30S ribosomal subunit. Contacts proteins S4 and S8.

With S4 and S12 plays an important role in translational accuracy. Functionally, located at the back of the 30S subunit body where it stabilizes the conformation of the head with respect to the body. The sequence is that of Small ribosomal subunit protein uS5 from Mycoplasma capricolum subsp. capricolum (strain California kid / ATCC 27343 / NCTC 10154).